The following is a 302-amino-acid chain: UDP-N-acetylenolpyruvoylglucosamine reductase (302 aa).

The 166-residue stretch at 23-188 folds into the FAD-binding PCMH-type domain; it reads KVGGNAEIFF…LKAVFKVNKG (166 aa). Residue Arg-168 is part of the active site. The Proton donor role is filled by Ser-217. The active site involves Glu-287.

The protein belongs to the MurB family. It depends on FAD as a cofactor.

It localises to the cytoplasm. It catalyses the reaction UDP-N-acetyl-alpha-D-muramate + NADP(+) = UDP-N-acetyl-3-O-(1-carboxyvinyl)-alpha-D-glucosamine + NADPH + H(+). It functions in the pathway cell wall biogenesis; peptidoglycan biosynthesis. Its function is as follows. Cell wall formation. The polypeptide is UDP-N-acetylenolpyruvoylglucosamine reductase (Rickettsia bellii (strain RML369-C)).